A 130-amino-acid polypeptide reads, in one-letter code: Holo-[acyl-carrier-protein] synthase (130 aa).

Mg(2+) contacts are provided by aspartate 8 and glutamate 62.

This sequence belongs to the P-Pant transferase superfamily. AcpS family. Mg(2+) is required as a cofactor.

The protein localises to the cytoplasm. The catalysed reaction is apo-[ACP] + CoA = holo-[ACP] + adenosine 3',5'-bisphosphate + H(+). Functionally, transfers the 4'-phosphopantetheine moiety from coenzyme A to a Ser of acyl-carrier-protein. The protein is Holo-[acyl-carrier-protein] synthase of Acidovorax ebreus (strain TPSY) (Diaphorobacter sp. (strain TPSY)).